A 125-amino-acid chain; its full sequence is Fluoride-specific ion channel FluC (125 aa).

4 helical membrane passes run 4–24, 32–52, 68–88, and 100–120; these read VIYV…VGIV, FLPW…GLFA, LLIT…LDTV, and AFYV…GLAV. Gly-75 and Thr-78 together coordinate Na(+).

This sequence belongs to the fluoride channel Fluc/FEX (TC 1.A.43) family.

It is found in the cell inner membrane. The catalysed reaction is fluoride(in) = fluoride(out). Its activity is regulated as follows. Na(+) is not transported, but it plays an essential structural role and its presence is essential for fluoride channel function. In terms of biological role, fluoride-specific ion channel. Important for reducing fluoride concentration in the cell, thus reducing its toxicity. The protein is Fluoride-specific ion channel FluC of Allorhizobium ampelinum (strain ATCC BAA-846 / DSM 112012 / S4) (Agrobacterium vitis (strain S4)).